We begin with the raw amino-acid sequence, 392 residues long: MNSLGFDKAPQDTRVVVAMSGGVDSSVTAALLKEQGYDVVGITLQLYDHGLTVGRKGACCAGQDIYDARQVADRIDIPHYVLDYESRFGQSVIDDFADSYLRGETPIPCVRCNQRVKFRDLLAQARDLGADCLATGHYARRVAGPTGPALHRGADPARDQSYFLFATTPAQLDYLRFPIGHLPKSETRALAERLGLAVADKPDSQDICFVPAGNYAQVVEKLRPGAVEPGEIVHLDGRVLGRHDGVIRYTVGQRRGLGIGGRRTPEGEELDPLYVVRVEPETRRVVVGPRTALARDRVLVREVNWLGGTDTADVPVTVKLRSAQPALPARVSLTADGGAVVTLTQPQYGVAPGQAAVFYQGDRVLGGGWIVRAEASPALADAPIPAGAGTAL.

ATP-binding positions include 18-25 and leucine 44; that span reads AMSGGVDS. The active-site Nucleophile is the cysteine 112. The cysteines at positions 112 and 208 are disulfide-linked. Glycine 136 is an ATP binding site. Residues 158-160 are interaction with tRNA; sequence RDQ. Cysteine 208 (cysteine persulfide intermediate) is an active-site residue.

The protein belongs to the MnmA/TRMU family.

It localises to the cytoplasm. The catalysed reaction is S-sulfanyl-L-cysteinyl-[protein] + uridine(34) in tRNA + AH2 + ATP = 2-thiouridine(34) in tRNA + L-cysteinyl-[protein] + A + AMP + diphosphate + H(+). Catalyzes the 2-thiolation of uridine at the wobble position (U34) of tRNA, leading to the formation of s(2)U34. The polypeptide is tRNA-specific 2-thiouridylase MnmA (Rhodospirillum centenum (strain ATCC 51521 / SW)).